The following is a 393-amino-acid chain: Mitogen-activated protein kinase 10 (393 aa).

In terms of domain architecture, Protein kinase spans 60 to 345 (KPPIRPIGRG…VKEALAHPYL (286 aa)). ATP-binding positions include 66–74 (IGRGACGIV) and Lys89. The active-site Proton acceptor is the Asp186. Position 218 is a phosphothreonine (Thr218). Residues 218-220 (TEY) carry the TXY motif. Tyr220 is subject to Phosphotyrosine. Phosphothreonine is present on Thr223.

Belongs to the protein kinase superfamily. CMGC Ser/Thr protein kinase family. MAP kinase subfamily. In terms of assembly, interacts with MKK2. In terms of processing, dually phosphorylated on Thr-218 and Tyr-220, which activates the enzyme.

The enzyme catalyses L-seryl-[protein] + ATP = O-phospho-L-seryl-[protein] + ADP + H(+). It catalyses the reaction L-threonyl-[protein] + ATP = O-phospho-L-threonyl-[protein] + ADP + H(+). Activated by threonine and tyrosine phosphorylation. The chain is Mitogen-activated protein kinase 10 (MPK10) from Arabidopsis thaliana (Mouse-ear cress).